A 151-amino-acid polypeptide reads, in one-letter code: 3-dehydroquinate dehydratase (151 aa).

Tyrosine 24 serves as the catalytic Proton acceptor. Residues asparagine 76, histidine 82, and aspartate 89 each contribute to the substrate site. Catalysis depends on histidine 102, which acts as the Proton donor. Substrate is bound by residues 103 to 104 and arginine 113; that span reads LS.

The protein belongs to the type-II 3-dehydroquinase family. As to quaternary structure, homododecamer.

It catalyses the reaction 3-dehydroquinate = 3-dehydroshikimate + H2O. It functions in the pathway metabolic intermediate biosynthesis; chorismate biosynthesis; chorismate from D-erythrose 4-phosphate and phosphoenolpyruvate: step 3/7. In terms of biological role, catalyzes a trans-dehydration via an enolate intermediate. This chain is 3-dehydroquinate dehydratase, found in Acinetobacter baumannii (strain AB307-0294).